The chain runs to 661 residues: uncharacterized protein (661 aa).

The disordered stretch occupies residues 25–52; sequence LLPSEPPVGDMNNEDSDTNTSITQSPTN. Residues 42–52 are compositionally biased toward polar residues; the sequence is TNTSITQSPTN. In terms of domain architecture, SANT spans 246–297; the sequence is SMPDIWNEEQHSIFVQQFILHGKKFGKIAEAVPGKNSKECVLHYYLTKRTTD. Disordered regions lie at residues 306 to 329, 478 to 499, 548 to 570, and 604 to 633; these read TKTKGRRRKKLLPSQRGGKKKSKG, YYEPKLEQHSSSKRNSISTRKE, PMKMPLTPRRASTGPRPRPTFQL, and RIDELSVEDQEHTTHSSHTTSDINAFPNSQ. The span at 308-328 shows a compositional bias: basic residues; that stretch reads TKGRRRKKLLPSQRGGKKKSK. The span at 478–487 shows a compositional bias: basic and acidic residues; it reads YYEPKLEQHS. A compositionally biased stretch (basic and acidic residues) spans 604-617; that stretch reads RIDELSVEDQEHTT.

It localises to the nucleus. This is an uncharacterized protein from Schizosaccharomyces pombe (strain 972 / ATCC 24843) (Fission yeast).